We begin with the raw amino-acid sequence, 339 residues long: Pleckstrin homology domain protein opy1 (339 aa).

Positions 25–119 (RVLKSGWLIK…WVHVLRSTTG (95 aa)) constitute a PH 1 domain. Over residues 141-167 (ESEPNVQISDTDFDNISTEPRNQTTSP) the composition is skewed to polar residues. The disordered stretch occupies residues 141–170 (ESEPNVQISDTDFDNISTEPRNQTTSPLDL). In terms of domain architecture, PH 2 spans 233-330 (KVLMQGTIHW…WVAALKTSID (98 aa)).

As to quaternary structure, interacts (via domain PH 1) with phosphatidylinositol 4-phosphate 5-kinase its3; the interaction is direct but opy1 does not appear to regulate its3 localization or function.

Its subcellular location is the cell tip. It is found in the cell membrane. In terms of biological role, binds phosphatidylinositol 4,5-bisphosphate (PtdIns(4,5)P2/PIP2) at the cell membrane. This is Pleckstrin homology domain protein opy1 from Schizosaccharomyces pombe (strain 972 / ATCC 24843) (Fission yeast).